A 155-amino-acid chain; its full sequence is Small ribosomal subunit protein uS7 (155 aa).

It belongs to the universal ribosomal protein uS7 family. As to quaternary structure, part of the 30S ribosomal subunit. Contacts proteins S9 and S11.

Functionally, one of the primary rRNA binding proteins, it binds directly to 16S rRNA where it nucleates assembly of the head domain of the 30S subunit. Is located at the subunit interface close to the decoding center, probably blocks exit of the E-site tRNA. In Helicobacter pylori (strain Shi470), this protein is Small ribosomal subunit protein uS7.